Here is a 491-residue protein sequence, read N- to C-terminus: Protein phosphatase ppm-1.G (491 aa).

Residues 23-486 enclose the PPM-type phosphatase domain; that stretch reads SYACTTMQGW…DNMTVICTTF (464 aa). Positions 57 and 58 each coordinate Mn(2+). Basic and acidic residues predominate over residues 112-125; the sequence is KDIGDEGKPKKAGG. Disordered stretches follow at residues 112-136 and 170-294; these read KDIG…ADRI and GDVS…EEMV. Acidic residues-rich tracts occupy residues 173–192 and 260–294; these read SDDS…QDDT and ATEE…EEMV. Mn(2+) contacts are provided by Asp428 and Asp477.

Belongs to the PP2C family. Requires Mg(2+) as cofactor. It depends on Mn(2+) as a cofactor.

It carries out the reaction O-phospho-L-seryl-[protein] + H2O = L-seryl-[protein] + phosphate. The enzyme catalyses O-phospho-L-threonyl-[protein] + H2O = L-threonyl-[protein] + phosphate. The polypeptide is Protein phosphatase ppm-1.G (Caenorhabditis elegans).